The sequence spans 626 residues: Janus kinase and microtubule-interacting protein 1 (626 aa).

Residues 1–25 form a disordered region; the sequence is MSKKGRSKGDKPEAETDSVQMANEE. Positions 1-365 are mediates association with microtubules; it reads MSKKGRSKGD…KLKSLTRENV (365 aa). Coiled-coil stretches lie at residues 13-255 and 284-413; these read EAET…EAER and ERDV…DDLS. Positions 365–626 are mediates interaction with TYK2 and GABBR1; sequence VEMKEKLSAQ…ILFEPKLKFM (262 aa). S382 is modified (phosphoserine). Residues 452–461 show a composition bias toward polar residues; it reads ETLSETSYNT. A disordered region spans residues 452 to 481; it reads ETLSETSYNTDRTDRTPATPEEDLDETTTR. Position 470 is a phosphothreonine (T470). Positions 490–604 form a coiled coil; it reads QLTREYQALQ…EFRVLELEVR (115 aa).

Belongs to the JAKMIP family. As to quaternary structure, homodimer. Interacts with JAK1 and TYK2. Forms a complex with GABBR1 and KIF5B/kinesin-1. Phosphorylated.

The protein localises to the cytoplasm. Its subcellular location is the cytoskeleton. It is found in the membrane. Functionally, associates with microtubules and may play a role in the microtubule-dependent transport of the GABA-B receptor. May play a role in JAK1 signaling and regulate microtubule cytoskeleton rearrangements. The sequence is that of Janus kinase and microtubule-interacting protein 1 (Jakmip1) from Mus musculus (Mouse).